Consider the following 584-residue polypeptide: Major capsid protein (584 aa).

Belongs to the NCLDV major capsid protein family.

Its subcellular location is the virion. Its function is as follows. Major protein of the capsid. This chain is Major capsid protein (MCP), found in Haptolina ericina (CeV01).